The following is a 353-amino-acid chain: Photosystem II protein D1 (353 aa).

T2 carries the N-acetylthreonine modification. Residue T2 is modified to Phosphothreonine. The next 3 helical transmembrane spans lie at Y29–S46, H118–L133, and W142–A156. A chlorophyll a-binding site is contributed by H118. Y126 is a binding site for pheophytin a. 2 residues coordinate [CaMn4O5] cluster: D170 and E189. The chain crosses the membrane as a helical span at residues F197 to L218. H198 is a chlorophyll a binding site. Residues H215 and S264 to F265 each bind a quinone. Position 215 (H215) interacts with Fe cation. H272 is a binding site for Fe cation. A helical membrane pass occupies residues F274–L288. [CaMn4O5] cluster-binding residues include H332, E333, D342, and A344. The propeptide occupies S345–G353.

It belongs to the reaction center PufL/M/PsbA/D family. In terms of assembly, PSII is composed of 1 copy each of membrane proteins PsbA, PsbB, PsbC, PsbD, PsbE, PsbF, PsbH, PsbI, PsbJ, PsbK, PsbL, PsbM, PsbT, PsbX, PsbY, PsbZ, Psb30/Ycf12, at least 3 peripheral proteins of the oxygen-evolving complex and a large number of cofactors. It forms dimeric complexes. The D1/D2 heterodimer binds P680, chlorophylls that are the primary electron donor of PSII, and subsequent electron acceptors. It shares a non-heme iron and each subunit binds pheophytin, quinone, additional chlorophylls, carotenoids and lipids. D1 provides most of the ligands for the Mn4-Ca-O5 cluster of the oxygen-evolving complex (OEC). There is also a Cl(-1) ion associated with D1 and D2, which is required for oxygen evolution. The PSII complex binds additional chlorophylls, carotenoids and specific lipids. is required as a cofactor. Tyr-161 forms a radical intermediate that is referred to as redox-active TyrZ, YZ or Y-Z. Post-translationally, C-terminally processed by CTPA; processing is essential to allow assembly of the oxygen-evolving complex and thus photosynthetic growth.

The protein resides in the plastid. Its subcellular location is the chloroplast thylakoid membrane. The enzyme catalyses 2 a plastoquinone + 4 hnu + 2 H2O = 2 a plastoquinol + O2. Its function is as follows. Photosystem II (PSII) is a light-driven water:plastoquinone oxidoreductase that uses light energy to abstract electrons from H(2)O, generating O(2) and a proton gradient subsequently used for ATP formation. It consists of a core antenna complex that captures photons, and an electron transfer chain that converts photonic excitation into a charge separation. The D1/D2 (PsbA/PsbD) reaction center heterodimer binds P680, the primary electron donor of PSII as well as several subsequent electron acceptors. This is Photosystem II protein D1 from Gnetum parvifolium (Small-leaved jointfir).